Here is a 333-residue protein sequence, read N- to C-terminus: MVEKIDFVVAWVDGNDLVWREKKAQYDGSINTFKEGMNSEKSYREWGTFKYWFRGVEKFAPWVNKIYLVTDQQKPSWLDINSEKLVLVDHTEIICNDYLPVFSANPIESNIHRIPGLSEHFVFFNDDMYLTAPVEPIDFFSEDGLPKYVTALAPITTERYGTGHFQMNDMGIITSHFSKKEILNNGHFFSFKHGIKQLIKTLLYGTTKFICGFWESHLPYPLLKSTMDLVWEKEKAVLETTSASRFRSPSDTNVWLFKYWQIASGQYAIGNPKLGGLFSLDNAGPDFWKLLNSGKYQIMCINDGHNVQDEEQVMTDFVKAMDQLLPDKSSFEI.

Belongs to the stealth family.

Functionally, part of the type 2Gn receptor polysaccharide (RPS) biosynthesis locus. Essential for cell surface RPS production, and for synthesis of the host-like GalNAc beta 1-3Gal (Gn) motif of the RPS. Probably encodes a 1-3Gal alpha transferase. The protein is Receptor polysaccharide phosphotransferase WefC (wefC) of Streptococcus gordonii.